A 368-amino-acid chain; its full sequence is MNKDNHHIKVSLTNNPYEIVIGKSSLESIGDELFNIGFREGLKVLVVSNKEVSDHYGDCIIKSLIKSKFKPKLLIIKAGEDQKNQSSIDLIHNAAYEARLERGSLMIALGGGVIGDMTGFAAATWLRGVNVVQIPTTLLAMVDASIGGKTGINHSKGKNLIGAFHQPRLVLIDPKTLITLPSREFKAGMAEIIKYGVISDLELFELLERQENISDLSNIKEKLLIEIIKRSAKSKAEIVIKDEKESGVRAFLNYGHTFGHVIENLCGYGKWLHGEAVAMGMVAVGQLAVQRGLWKEDNAKRQKRLIEKAGLPSNWPQLEIESVLSSLQGDKKVKNGKVSFVMPLKIGDVKLFNNISNKEIRECLQKIS.

NAD(+) is bound by residues 112-116, 136-137, K149, K158, and 176-179; these read GVIGD, TT, and TLIT. The Zn(2+) site is built by E191, H256, and H273.

Belongs to the sugar phosphate cyclases superfamily. Dehydroquinate synthase family. Co(2+) serves as cofactor. Zn(2+) is required as a cofactor. It depends on NAD(+) as a cofactor.

The protein resides in the cytoplasm. The catalysed reaction is 7-phospho-2-dehydro-3-deoxy-D-arabino-heptonate = 3-dehydroquinate + phosphate. Its pathway is metabolic intermediate biosynthesis; chorismate biosynthesis; chorismate from D-erythrose 4-phosphate and phosphoenolpyruvate: step 2/7. Its function is as follows. Catalyzes the conversion of 3-deoxy-D-arabino-heptulosonate 7-phosphate (DAHP) to dehydroquinate (DHQ). The chain is 3-dehydroquinate synthase from Prochlorococcus marinus (strain NATL2A).